Consider the following 390-residue polypeptide: Phosphopentomutase (390 aa).

Mn(2+)-binding residues include Asp-9, Asp-283, His-288, Asp-324, His-325, and His-336.

Belongs to the phosphopentomutase family. Mn(2+) serves as cofactor.

The protein resides in the cytoplasm. The enzyme catalyses 2-deoxy-alpha-D-ribose 1-phosphate = 2-deoxy-D-ribose 5-phosphate. It carries out the reaction alpha-D-ribose 1-phosphate = D-ribose 5-phosphate. Its pathway is carbohydrate degradation; 2-deoxy-D-ribose 1-phosphate degradation; D-glyceraldehyde 3-phosphate and acetaldehyde from 2-deoxy-alpha-D-ribose 1-phosphate: step 1/2. Functionally, isomerase that catalyzes the conversion of deoxy-ribose 1-phosphate (dRib-1-P) and ribose 1-phosphate (Rib-1-P) to deoxy-ribose 5-phosphate (dRib-5-P) and ribose 5-phosphate (Rib-5-P), respectively. This chain is Phosphopentomutase, found in Thermotoga maritima (strain ATCC 43589 / DSM 3109 / JCM 10099 / NBRC 100826 / MSB8).